The primary structure comprises 293 residues: Nucleotide-binding protein Bcer98_3698 (293 aa).

14–21 (GMSGAGKT) lines the ATP pocket. 65 to 68 (DLRG) is a GTP binding site.

Belongs to the RapZ-like family.

Displays ATPase and GTPase activities. The protein is Nucleotide-binding protein Bcer98_3698 of Bacillus cytotoxicus (strain DSM 22905 / CIP 110041 / 391-98 / NVH 391-98).